A 29-amino-acid polypeptide reads, in one-letter code: Trypsin inhibitor 3 (29 aa).

Disulfide bonds link cysteine 3/cysteine 20, cysteine 10/cysteine 22, and cysteine 16/cysteine 28.

The protein belongs to the protease inhibitor I7 (squash-type serine protease inhibitor) family.

Its subcellular location is the secreted. Its function is as follows. Strongly inhibits trypsin, weakly inhibits chymotrypsin. This chain is Trypsin inhibitor 3, found in Cyclanthera pedata (Achocha).